Here is a 488-residue protein sequence, read N- to C-terminus: Glutamyl-tRNA(Gln) amidotransferase subunit A (488 aa).

Catalysis depends on charge relay system residues Lys-77 and Ser-152. Ser-176 (acyl-ester intermediate) is an active-site residue.

It belongs to the amidase family. GatA subfamily. In terms of assembly, heterotrimer of A, B and C subunits.

The enzyme catalyses L-glutamyl-tRNA(Gln) + L-glutamine + ATP + H2O = L-glutaminyl-tRNA(Gln) + L-glutamate + ADP + phosphate + H(+). Its function is as follows. Allows the formation of correctly charged Gln-tRNA(Gln) through the transamidation of misacylated Glu-tRNA(Gln) in organisms which lack glutaminyl-tRNA synthetase. The reaction takes place in the presence of glutamine and ATP through an activated gamma-phospho-Glu-tRNA(Gln). The chain is Glutamyl-tRNA(Gln) amidotransferase subunit A from Streptococcus agalactiae serotype Ia (strain ATCC 27591 / A909 / CDC SS700).